A 250-amino-acid chain; its full sequence is NAD(P)H-quinone oxidoreductase subunit K, chloroplastic (250 aa).

Residues Cys-61, Cys-62, Cys-126, and Cys-157 each coordinate [4Fe-4S] cluster.

The protein belongs to the complex I 20 kDa subunit family. As to quaternary structure, NDH is composed of at least 16 different subunits, 5 of which are encoded in the nucleus. [4Fe-4S] cluster is required as a cofactor.

It is found in the plastid. It localises to the chloroplast thylakoid membrane. The catalysed reaction is a plastoquinone + NADH + (n+1) H(+)(in) = a plastoquinol + NAD(+) + n H(+)(out). It catalyses the reaction a plastoquinone + NADPH + (n+1) H(+)(in) = a plastoquinol + NADP(+) + n H(+)(out). In terms of biological role, NDH shuttles electrons from NAD(P)H:plastoquinone, via FMN and iron-sulfur (Fe-S) centers, to quinones in the photosynthetic chain and possibly in a chloroplast respiratory chain. The immediate electron acceptor for the enzyme in this species is believed to be plastoquinone. Couples the redox reaction to proton translocation, and thus conserves the redox energy in a proton gradient. This Angiopteris evecta (Mule's foot fern) protein is NAD(P)H-quinone oxidoreductase subunit K, chloroplastic.